Reading from the N-terminus, the 105-residue chain is Met repressor (105 aa).

Belongs to the MetJ family. As to quaternary structure, homodimer.

It is found in the cytoplasm. This regulatory protein, when combined with SAM (S-adenosylmethionine) represses the expression of the methionine regulon and of enzymes involved in SAM synthesis. The sequence is that of Met repressor from Shigella boydii serotype 18 (strain CDC 3083-94 / BS512).